A 337-amino-acid chain; its full sequence is Pseudouridine-5'-phosphate glycosidase (337 aa).

Glu-26 acts as the Proton donor in catalysis. Substrate contacts are provided by Lys-87 and Val-107. Asp-139 is a Mn(2+) binding site. A substrate-binding site is contributed by Ser-141–Asp-143. The active-site Nucleophile is Lys-160. Over residues Ser-306–Arg-325 the composition is skewed to low complexity. Residues Ser-306–Trp-337 form a disordered region.

The protein belongs to the pseudouridine-5'-phosphate glycosidase family. As to quaternary structure, homotrimer. The cofactor is Mn(2+).

The enzyme catalyses D-ribose 5-phosphate + uracil = psi-UMP + H2O. Functionally, catalyzes the reversible cleavage of pseudouridine 5'-phosphate (PsiMP) to ribose 5-phosphate and uracil. Functions biologically in the cleavage direction, as part of a pseudouridine degradation pathway. The protein is Pseudouridine-5'-phosphate glycosidase of Methylobacterium nodulans (strain LMG 21967 / CNCM I-2342 / ORS 2060).